A 368-amino-acid chain; its full sequence is UDP-N-acetylglucosamine--N-acetylmuramyl-(pentapeptide) pyrophosphoryl-undecaprenol N-acetylglucosamine transferase (368 aa).

UDP-N-acetyl-alpha-D-glucosamine-binding positions include 14 to 16 (TGG), asparagine 125, arginine 168, serine 196, and glutamine 297.

Belongs to the glycosyltransferase 28 family. MurG subfamily.

It is found in the cell inner membrane. The enzyme catalyses di-trans,octa-cis-undecaprenyl diphospho-N-acetyl-alpha-D-muramoyl-L-alanyl-D-glutamyl-meso-2,6-diaminopimeloyl-D-alanyl-D-alanine + UDP-N-acetyl-alpha-D-glucosamine = di-trans,octa-cis-undecaprenyl diphospho-[N-acetyl-alpha-D-glucosaminyl-(1-&gt;4)]-N-acetyl-alpha-D-muramoyl-L-alanyl-D-glutamyl-meso-2,6-diaminopimeloyl-D-alanyl-D-alanine + UDP + H(+). It participates in cell wall biogenesis; peptidoglycan biosynthesis. Functionally, cell wall formation. Catalyzes the transfer of a GlcNAc subunit on undecaprenyl-pyrophosphoryl-MurNAc-pentapeptide (lipid intermediate I) to form undecaprenyl-pyrophosphoryl-MurNAc-(pentapeptide)GlcNAc (lipid intermediate II). This chain is UDP-N-acetylglucosamine--N-acetylmuramyl-(pentapeptide) pyrophosphoryl-undecaprenol N-acetylglucosamine transferase, found in Nitrobacter winogradskyi (strain ATCC 25391 / DSM 10237 / CIP 104748 / NCIMB 11846 / Nb-255).